Reading from the N-terminus, the 205-residue chain is Small ribosomal subunit protein uS4 (205 aa).

One can recognise an S4 RNA-binding domain in the interval Ser-94 to Ile-157.

This sequence belongs to the universal ribosomal protein uS4 family. As to quaternary structure, part of the 30S ribosomal subunit. Contacts protein S5. The interaction surface between S4 and S5 is involved in control of translational fidelity.

One of the primary rRNA binding proteins, it binds directly to 16S rRNA where it nucleates assembly of the body of the 30S subunit. Its function is as follows. With S5 and S12 plays an important role in translational accuracy. The sequence is that of Small ribosomal subunit protein uS4 from Rickettsia prowazekii (strain Madrid E).